A 260-amino-acid chain; its full sequence is 2-oxo-tetronate isomerase (260 aa).

Glu143 acts as the Proton donor/acceptor in catalysis. Mg(2+) contacts are provided by Glu143, Asp178, Gln204, and Glu240. Glu240 functions as the Proton donor/acceptor in the catalytic mechanism.

The protein belongs to the hyi family. OtnI subfamily.

It catalyses the reaction 2-dehydro-L-erythronate = 3-dehydro-L-erythronate. The catalysed reaction is 2-dehydro-D-erythronate = 3-dehydro-D-erythronate. Catalyzes the isomerization of 2-oxo-tetronate to 3-oxo-tetronate. This chain is 2-oxo-tetronate isomerase, found in Cupriavidus necator (strain ATCC 17699 / DSM 428 / KCTC 22496 / NCIMB 10442 / H16 / Stanier 337) (Ralstonia eutropha).